The sequence spans 671 residues: Beta-galactosidase 1 (671 aa).

The first 18 residues, 1–18, serve as a signal peptide directing secretion; it reads MKLIVLIFFLLFINLNYC. The active-site Proton donor is the glutamate 200. An N-linked (GlcNAc...) asparagine glycan is attached at asparagine 228. Catalysis depends on glutamate 288, which acts as the Nucleophile. Residues asparagine 321, asparagine 391, asparagine 400, asparagine 499, asparagine 509, asparagine 564, and asparagine 595 are each glycosylated (N-linked (GlcNAc...) asparagine).

This sequence belongs to the glycosyl hydrolase 35 family.

The protein localises to the lysosome. The enzyme catalyses Hydrolysis of terminal non-reducing beta-D-galactose residues in beta-D-galactosides.. In terms of biological role, cleaves beta-linked terminal galactosyl residues from gangliosides, glycoproteins, and glycosaminoglycans. This chain is Beta-galactosidase 1 (glb1), found in Dictyostelium discoideum (Social amoeba).